The chain runs to 175 residues: uncharacterized protein (175 aa).

A mitochondrion-targeting transit peptide spans Met1–Asn11. Positions Gln29–Asn48 are disordered.

The protein resides in the mitochondrion. This is an uncharacterized protein from Mus musculus (Mouse).